The primary structure comprises 297 residues: Ezy-1 protein (297 aa).

Disordered regions lie at residues 1-34, 115-151, and 255-297; these read MAAV…GDGG, FTGK…SSSS, and QPAG…SPNM. Positions 123-135 are enriched in acidic residues; that stretch reads AEGDDGEDEEEGE. Positions 136-150 are enriched in low complexity; it reads AQGVGKDAVDSSSSS. The span at 259–269 shows a compositional bias: basic and acidic residues; sequence DGHEPEPKRPE.

In Chlamydomonas reinhardtii (Chlamydomonas smithii), this protein is Ezy-1 protein (Ezy-1).